We begin with the raw amino-acid sequence, 247 residues long: Carboxy-S-adenosyl-L-methionine synthase (247 aa).

S-adenosyl-L-methionine-binding positions include tyrosine 40, 65–67, 90–91, 122–123, asparagine 137, and arginine 204; these read GAS, DN, and DI.

It belongs to the class I-like SAM-binding methyltransferase superfamily. Cx-SAM synthase family. In terms of assembly, homodimer.

The enzyme catalyses prephenate + S-adenosyl-L-methionine = carboxy-S-adenosyl-L-methionine + 3-phenylpyruvate + H2O. Catalyzes the conversion of S-adenosyl-L-methionine (SAM) to carboxy-S-adenosyl-L-methionine (Cx-SAM). In Pseudomonas putida (strain GB-1), this protein is Carboxy-S-adenosyl-L-methionine synthase.